Consider the following 293-residue polypeptide: 4-hydroxy-tetrahydrodipicolinate synthase 1 (293 aa).

Threonine 46 provides a ligand contact to pyruvate. The active-site Proton donor/acceptor is the tyrosine 134. Lysine 162 acts as the Schiff-base intermediate with substrate in catalysis. Position 204 (isoleucine 204) interacts with pyruvate.

It belongs to the DapA family. As to quaternary structure, homotetramer; dimer of dimers.

It localises to the cytoplasm. It catalyses the reaction L-aspartate 4-semialdehyde + pyruvate = (2S,4S)-4-hydroxy-2,3,4,5-tetrahydrodipicolinate + H2O + H(+). Its pathway is amino-acid biosynthesis; L-lysine biosynthesis via DAP pathway; (S)-tetrahydrodipicolinate from L-aspartate: step 3/4. Its function is as follows. Catalyzes the condensation of (S)-aspartate-beta-semialdehyde [(S)-ASA] and pyruvate to 4-hydroxy-tetrahydrodipicolinate (HTPA). This is 4-hydroxy-tetrahydrodipicolinate synthase 1 from Clostridium acetobutylicum (strain ATCC 824 / DSM 792 / JCM 1419 / IAM 19013 / LMG 5710 / NBRC 13948 / NRRL B-527 / VKM B-1787 / 2291 / W).